A 321-amino-acid chain; its full sequence is AA9 family lytic polysaccharide monooxygenase C (321 aa).

A signal peptide spans 1–18 (MKLQLIIPFSFLISYVSA). Cu(2+) is bound at residue His-19. Asn-33 carries N-linked (GlcNAc...) asparagine glycosylation. 2 disulfides stabilise this stretch: Cys-57–Cys-191 and Cys-161–Cys-242. His-103 is a Cu(2+) binding site. Positions 177 and 186 each coordinate O2. Tyr-188 lines the Cu(2+) pocket. The N-linked (GlcNAc...) asparagine glycan is linked to Asn-195. One can recognise a CBM1 domain in the interval 283 to 319 (GTAAIYAQCGGQGWTGATVCASGSKCVVSSAFYSQCL).

Belongs to the polysaccharide monooxygenase AA9 family. Cu(2+) is required as a cofactor.

It is found in the secreted. It carries out the reaction [(1-&gt;4)-beta-D-glucosyl]n+m + reduced acceptor + O2 = 4-dehydro-beta-D-glucosyl-[(1-&gt;4)-beta-D-glucosyl]n-1 + [(1-&gt;4)-beta-D-glucosyl]m + acceptor + H2O.. Major lytic polysaccharide monooxygenase (LPMO) that depolymerizes crystalline and amorphous polysaccharides via the oxidation of scissile alpha- or beta-(1-4)-glycosidic bonds, yielding C1 and C4 oxidation products. Catalysis by LPMOs requires the reduction of the active-site copper from Cu(II) to Cu(I) by a reducing agent and H(2)O(2) or O(2) as a cosubstrate. The polypeptide is AA9 family lytic polysaccharide monooxygenase C (Botryotinia fuckeliana (strain B05.10) (Noble rot fungus)).